We begin with the raw amino-acid sequence, 170 residues long: Cathelicidin antimicrobial peptide (170 aa).

The signal sequence occupies residues 1-30 (MKTQRHGPSLGRWSLVLLLLGLVMPLAIVA). The propeptide at 31–131 (QVLSYQEAVL…DISCDKDNRR (101 aa)) is cathelin-like domain (CLD). 2 cysteine pairs are disulfide-bonded: Cys-86–Cys-97 and Cys-108–Cys-125. Positions 150 to 162 (LKKIGQKIKDFLG) are active core.

This sequence belongs to the cathelicidin family. Monomer, homodimer or homotrimer (in vitro). Oligomerizes as tetra- or hexamer in solution (in vitro). Proteolytically cleaved by proteinase PRTN3 into antibacterial peptide LL-37. Proteolytically cleaved by cathepsin CTSG and neutrophil elastase ELANE. In terms of processing, resistant to proteolytic degradation in solution, and when bound to both zwitterionic (mimicking mammalian membranes) and negatively charged membranes (mimicking bacterial membranes). Post-translationally, after secretion onto the skin surface, the CAMP gene product is processed by a serine protease-dependent mechanism into multiple novel antimicrobial peptides distinct from and shorter than cathelicidin LL-37. These peptides show enhanced antimicrobial action, acquiring the ability to kill skin pathogens such as S.aureus, E.coli and C.albicans. These peptides have lost the ability to stimulate CXCL8/IL8 release from keratinocytes. The peptides act synergistically, killing bacteria at lower concentrations when present together, and maintain activity at increased salt condition.

The protein localises to the secreted. Its subcellular location is the vesicle. Functionally, antimicrobial protein that is an integral component of the innate immune system. Binds to bacterial lipopolysaccharides (LPS). Acts via neutrophil N-formyl peptide receptors to enhance the release of CXCL2. Postsecretory processing generates multiple cathelicidin antimicrobial peptides with various lengths which act as a topical antimicrobial defense in sweat on skin. The unprocessed precursor form, cathelicidin antimicrobial peptide, inhibits the growth of Gram-negative E.coli and E.aerogenes with efficiencies comparable to that of the mature peptide LL-37 (in vitro). Antimicrobial peptide that is an integral component of the innate immune system. Binds to bacterial lipopolysaccharides (LPS). Causes membrane permeabilization by forming transmembrane pores (in vitro). Causes lysis of E.coli. Exhibits antimicrobial activity against Gram-negative bacteria such as P.aeruginosa, S.typhimurium, E.aerogenes, E.coli and P.syringae, Gram-positive bacteria such as L.monocytogenes, S.epidermidis, S.pyogenes and S.aureus, as well as vancomycin-resistant enterococci (in vitro). Exhibits antimicrobial activity against methicillin-resistant S.aureus, P.mirabilis, and C.albicans in low-salt media, but not in media containing 100 mM NaCl (in vitro). Forms chiral supramolecular assemblies with quinolone signal (PQS) molecules of P.aeruginosa, which may lead to interference of bacterial quorum signaling and perturbance of bacterial biofilm formation. May form supramolecular fiber-like assemblies on bacterial membranes. Induces cytokine and chemokine producation as well as TNF/TNFA and CSF2/GMCSF production in normal human keratinocytes. Exhibits hemolytic activity against red blood cells. Its function is as follows. Exhibits antimicrobial activity against E.coli and B.megaterium (in vitro). The polypeptide is Cathelicidin antimicrobial peptide (Trachypithecus obscurus (Dusky leaf-monkey)).